Reading from the N-terminus, the 329-residue chain is Probable fructokinase-2 (329 aa).

The protein belongs to the carbohydrate kinase PfkB family.

It catalyses the reaction D-fructose + ATP = D-fructose 6-phosphate + ADP + H(+). The protein operates within glycan biosynthesis; starch biosynthesis. May play an important role in maintaining the flux of carbon towards starch formation. The chain is Probable fructokinase-2 from Arabidopsis thaliana (Mouse-ear cress).